Consider the following 609-residue polypeptide: Glutamine--fructose-6-phosphate aminotransferase [isomerizing] (609 aa).

Cys2 acts as the Nucleophile; for GATase activity in catalysis. The Glutamine amidotransferase type-2 domain occupies 2 to 217; the sequence is CGIVGAIAGR…EGDTAELRRD (216 aa). SIS domains are found at residues 284-425 and 458-599; these read TADA…LQGR and WAER…VDKP. Lys604 (for Fru-6P isomerization activity) is an active-site residue.

In terms of assembly, homodimer.

The protein resides in the cytoplasm. It carries out the reaction D-fructose 6-phosphate + L-glutamine = D-glucosamine 6-phosphate + L-glutamate. In terms of biological role, catalyzes the first step in hexosamine metabolism, converting fructose-6P into glucosamine-6P using glutamine as a nitrogen source. This is Glutamine--fructose-6-phosphate aminotransferase [isomerizing] from Xanthomonas campestris pv. campestris (strain ATCC 33913 / DSM 3586 / NCPPB 528 / LMG 568 / P 25).